The primary structure comprises 950 residues: Voltage-gated inwardly rectifying potassium channel KCNH6 (950 aa).

The Cytoplasmic segment spans residues 1–261; that stretch reads MPVRRGHVAP…YSPFKAVWDW (261 aa). The region spanning 41 to 70 is the PAS domain; sequence IIYCNDGFCELFGYSRVEVMQRPCTCDFLT. The PAC domain maps to 92–144; it reads CKVDILYYRKDASSFRCLVDVVPVKNEDGAVIMFILNFEDLAQLLAKSSSRSL. A disordered region spans residues 154 to 174; it reads LGSEGSHSRPSGQGPGPGRGK. A helical transmembrane segment spans residues 262-282; it reads LILLLVIYTAVFTPYSAAFLL. Topologically, residues 283–298 are extracellular; that stretch reads SDQDESQRGTCGYTCS. Residues 299 to 319 traverse the membrane as a helical segment; it reads PLTVVDLIVDIMFVVDIVINF. Topologically, residues 320–340 are cytoplasmic; that stretch reads RTTYVNTNDEVVSHPRRIAVH. Residues 341 to 361 traverse the membrane as a helical segment; that stretch reads YFKGWFLIDMVAAIPFDLLIF. Residues 362–370 lie on the Extracellular side of the membrane; the sequence is RTGSDETTT. A helical; Voltage-sensor transmembrane segment spans residues 371-391; that stretch reads LIGLLKTARLLRLVRVARKLD. At 392–398 the chain is on the cytoplasmic side; the sequence is RYSEYGA. A helical transmembrane segment spans residues 399-419; it reads AVLFLLMCTFALIAHWLACIW. The Extracellular segment spans residues 420 to 463; it reads YAIGNVERPYLEPKIGWLDSLGAQLGKQYNGSDPASGPSVQDKY. Positions 464 to 484 form an intramembrane region, pore-forming; it reads VTALYFTFSSLTSVGFGNVSP. The Selectivity filter motif lies at 476-481; it reads SVGFGN. Topologically, residues 485 to 490 are extracellular; the sequence is NTNSEK. The helical transmembrane segment at 491-511 threads the bilayer; the sequence is VFSICVMLIGSLMYASIFGNV. The Cytoplasmic segment spans residues 512 to 950; it reads SAIIQRLYSG…HGSDPGFTRS (439 aa). The cNMP-binding domain stretch occupies residues 594–694; it reads AFRGASKGCL…IHRADLLEVL (101 aa). Disordered stretches follow at residues 719-750 and 890-950; these read GGLQ…APSL and VPSS…FTRS. The segment covering 740–750 has biased composition (polar residues); the sequence is NDSQSGAAPSL. Residues 898–912 show a composition bias toward low complexity; the sequence is PGGLLSPLASPLRPL.

This sequence belongs to the potassium channel family. H (Eag) (TC 1.A.1.20) subfamily. Kv11.2/KCNH6 sub-subfamily. The potassium channel is probably composed of a homo- or heterotetrameric complex of pore-forming alpha subunits that can associate only within their subfamily. In terms of tissue distribution, highly expressed in celiac and superior mesenteric ganglia, but not detected in brain or in heart. Detected at low levels in retina. Also found in pituitary. Also found in the olfactory bulb (granular and mitral cell layers).

It is found in the cell membrane. The enzyme catalyses K(+)(in) = K(+)(out). In terms of biological role, pore-forming (alpha) subunit of voltage-gated inwardly rectifying potassium channel. Characterized by unusual gating kinetics by producing relatively small outward currents during membrane depolarization and large inward currents during subsequent repolarization which reflect a rapid inactivation during depolarization and quick recovery from inactivation but slow deactivation (closing) during repolarization. Activates even more slowly than KCNH2. The sequence is that of Voltage-gated inwardly rectifying potassium channel KCNH6 from Rattus norvegicus (Rat).